A 402-amino-acid chain; its full sequence is 4-hydroxy-3-methylbut-2-enyl diphosphate reductase (402 aa).

Residue C66 coordinates [4Fe-4S] cluster. H96 provides a ligand contact to (2E)-4-hydroxy-3-methylbut-2-enyl diphosphate. H96 is a binding site for dimethylallyl diphosphate. H96 is an isopentenyl diphosphate binding site. C157 lines the [4Fe-4S] cluster pocket. H185 contacts (2E)-4-hydroxy-3-methylbut-2-enyl diphosphate. Dimethylallyl diphosphate is bound at residue H185. H185 serves as a coordination point for isopentenyl diphosphate. The active-site Proton donor is the E187. T250 is a (2E)-4-hydroxy-3-methylbut-2-enyl diphosphate binding site. C288 lines the [4Fe-4S] cluster pocket. Positions 317, 318, 319, and 379 each coordinate (2E)-4-hydroxy-3-methylbut-2-enyl diphosphate. Residues S317, S318, N319, and S379 each contribute to the dimethylallyl diphosphate site. S317, S318, N319, and S379 together coordinate isopentenyl diphosphate.

The protein belongs to the IspH family. It depends on [4Fe-4S] cluster as a cofactor.

The catalysed reaction is isopentenyl diphosphate + 2 oxidized [2Fe-2S]-[ferredoxin] + H2O = (2E)-4-hydroxy-3-methylbut-2-enyl diphosphate + 2 reduced [2Fe-2S]-[ferredoxin] + 2 H(+). It catalyses the reaction dimethylallyl diphosphate + 2 oxidized [2Fe-2S]-[ferredoxin] + H2O = (2E)-4-hydroxy-3-methylbut-2-enyl diphosphate + 2 reduced [2Fe-2S]-[ferredoxin] + 2 H(+). Its pathway is isoprenoid biosynthesis; dimethylallyl diphosphate biosynthesis; dimethylallyl diphosphate from (2E)-4-hydroxy-3-methylbutenyl diphosphate: step 1/1. It functions in the pathway isoprenoid biosynthesis; isopentenyl diphosphate biosynthesis via DXP pathway; isopentenyl diphosphate from 1-deoxy-D-xylulose 5-phosphate: step 6/6. In terms of biological role, catalyzes the conversion of 1-hydroxy-2-methyl-2-(E)-butenyl 4-diphosphate (HMBPP) into a mixture of isopentenyl diphosphate (IPP) and dimethylallyl diphosphate (DMAPP). Acts in the terminal step of the DOXP/MEP pathway for isoprenoid precursor biosynthesis. The sequence is that of 4-hydroxy-3-methylbut-2-enyl diphosphate reductase from Thermosynechococcus vestitus (strain NIES-2133 / IAM M-273 / BP-1).